The chain runs to 130 residues: Cytochrome b-c1 complex subunit 7 (130 aa).

This sequence belongs to the UQCRB/QCR7 family. As to quaternary structure, component of the ubiquinol-cytochrome c oxidoreductase (cytochrome b-c1 complex, complex III, CIII), a multisubunit enzyme composed of 3 respiratory subunits cytochrome b, cytochrome c1 and Rieske protein, 2 core protein subunits, and additional low-molecular weight protein subunits. The complex exists as an obligatory dimer and forms supercomplexes (SCs) in the inner mitochondrial membrane with cytochrome c oxidase (complex IV, CIV).

It localises to the mitochondrion inner membrane. Its function is as follows. Component of the ubiquinol-cytochrome c oxidoreductase, a multisubunit transmembrane complex that is part of the mitochondrial electron transport chain which drives oxidative phosphorylation. The respiratory chain contains 3 multisubunit complexes succinate dehydrogenase (complex II, CII), ubiquinol-cytochrome c oxidoreductase (cytochrome b-c1 complex, complex III, CIII) and cytochrome c oxidase (complex IV, CIV), that cooperate to transfer electrons derived from NADH and succinate to molecular oxygen, creating an electrochemical gradient over the inner membrane that drives transmembrane transport and the ATP synthase. The cytochrome b-c1 complex catalyzes electron transfer from ubiquinol to cytochrome c, linking this redox reaction to translocation of protons across the mitochondrial inner membrane, with protons being carried across the membrane as hydrogens on the quinol. In the process called Q cycle, 2 protons are consumed from the matrix, 4 protons are released into the intermembrane space and 2 electrons are passed to cytochrome c. The sequence is that of Cytochrome b-c1 complex subunit 7 (UBCRBP) from Echinococcus multilocularis (Fox tapeworm).